Reading from the N-terminus, the 920-residue chain is DNA ligase (920 aa).

NAD(+) is bound by residues 90 to 94, 139 to 140, and glutamate 173; these read DAAYD and SL. The N6-AMP-lysine intermediate role is filled by lysine 175. NAD(+)-binding residues include arginine 196, glutamate 235, lysine 360, and lysine 384. Positions 481, 484, 500, and 506 each coordinate Zn(2+). Residues 659-691 are disordered; that stretch reads RAQGEAAIESAETQGDTASETTGAPTGAEAPLG. Over residues 669-682 the composition is skewed to polar residues; the sequence is AETQGDTASETTGA. The 82-residue stretch at 839–920 folds into the BRCT domain; that stretch reads SLPQTLAGKT…FAQLLATGTI (82 aa).

This sequence belongs to the NAD-dependent DNA ligase family. LigA subfamily. Mg(2+) serves as cofactor. The cofactor is Mn(2+).

The catalysed reaction is NAD(+) + (deoxyribonucleotide)n-3'-hydroxyl + 5'-phospho-(deoxyribonucleotide)m = (deoxyribonucleotide)n+m + AMP + beta-nicotinamide D-nucleotide.. Functionally, DNA ligase that catalyzes the formation of phosphodiester linkages between 5'-phosphoryl and 3'-hydroxyl groups in double-stranded DNA using NAD as a coenzyme and as the energy source for the reaction. It is essential for DNA replication and repair of damaged DNA. This is DNA ligase from Bifidobacterium longum (strain NCC 2705).